The sequence spans 115 residues: Promotilin (115 aa).

The N-terminal stretch at 1 to 25 is a signal peptide; the sequence is MVSRKAVAALLVVHAPAMLASQTEA. The tract at residues 40–74 is disordered; that stretch reads EKERSKGQKKSLSVWQRSGEEGPVDPAEPIEEEGN.

It belongs to the motilin family.

It localises to the secreted. Its function is as follows. Plays an important role in the regulation of interdigestive gastrointestinal motility and indirectly causes rhythmic contraction of duodenal and colonic smooth muscle. The sequence is that of Promotilin (MLN) from Macaca mulatta (Rhesus macaque).